The sequence spans 200 residues: Cleavage and polyadenylation specificity factor subunit 5 (200 aa).

One can recognise a Nudix hydrolase domain in the interval 45–170 (LRKAVEGIII…LSLIAVSLYE (126 aa)). Positions 70–72 (NYF) are interaction with RNA. The short motif at 77–98 (GKLKPGENEIDGLIRKLTKKLS) is the Nudix box element.

The protein belongs to the Nudix hydrolase family. CPSF5 subfamily. In terms of assembly, homodimer (via N- and C-terminus); binds RNA as homodimer. Component of the cleavage factor Im (CFIm) complex.

Its subcellular location is the nucleus. The protein localises to the cytoplasm. Component of the cleavage factor Im (CFIm) complex that functions as an activator of the pre-mRNA 3'-end cleavage and polyadenylation processing required for the maturation of pre-mRNA into functional mRNAs. CFIm contributes to the recruitment of multiprotein complexes on specific sequences on the pre-mRNA 3'-end, so called cleavage and polyadenylation signals (pA signals). Most pre-mRNAs contain multiple pA signals, resulting in alternative cleavage and polyadenylation (APA) producing mRNAs with variable 3'-end formation. The CFIm complex acts as a key regulator of cleavage and polyadenylation site choice during APA through its binding to 5'-UGUA-3' elements localized in the 3'-untranslated region (UTR) for a huge number of pre-mRNAs. Binds to 5'-UGUA-3' elements localized upstream of pA signals that act as enhancers of pre-mRNA 3'-end processing. The homodimer mediates simultaneous sequence-specific recognition of two 5'-UGUA-3' elements within the pre-mRNA. Plays a role in somatic cell fate transitions and pluripotency by regulating widespread changes in gene expression through an APA-dependent function. Binds to chromatin. The protein is Cleavage and polyadenylation specificity factor subunit 5 of Dictyostelium discoideum (Social amoeba).